We begin with the raw amino-acid sequence, 134 residues long: Holo-[acyl-carrier-protein] synthase (134 aa).

Positions 8 and 56 each coordinate Mg(2+).

This sequence belongs to the P-Pant transferase superfamily. AcpS family. The cofactor is Mg(2+).

It localises to the cytoplasm. The catalysed reaction is apo-[ACP] + CoA = holo-[ACP] + adenosine 3',5'-bisphosphate + H(+). Functionally, transfers the 4'-phosphopantetheine moiety from coenzyme A to a Ser of acyl-carrier-protein. The sequence is that of Holo-[acyl-carrier-protein] synthase from Clostridium kluyveri (strain ATCC 8527 / DSM 555 / NBRC 12016 / NCIMB 10680 / K1).